Here is a 517-residue protein sequence, read N- to C-terminus: Sugar transport protein MST1 (517 aa).

At 1-25 (MAGGVIVANDGDGSAVDHGGRLTFS) the chain is on the cytoplasmic side. The helical transmembrane segment at 26 to 46 (VVITCLVAASGGLIFGYDVGI) threads the bilayer. Over 47–83 (SGGVSTMEPFLRRFFPGVVRRMAEARPGNEYCVYDSQ) the chain is Extracellular. A helical transmembrane segment spans residues 84–104 (ALTAFTSSLYVAGLVASLVAS). The Cytoplasmic segment spans residues 105-120 (RVTRAMGRQAVMVMGG). A helical transmembrane segment spans residues 121–141 (ALFFAGGAVTGFAVNIAMLIV). Over 142–143 (GR) the chain is Extracellular. The helical transmembrane segment at 144-164 (MLLGFGVGFTNQAAPLFLAEM) threads the bilayer. Residues 165 to 170 (APTRWR) lie on the Cytoplasmic side of the membrane. The chain crosses the membrane as a helical span at residues 171-191 (GSLTAGFQFFLAVGVVIATVT). At 192–203 (NYFASRVPWGWR) the chain is on the extracellular side. Residues 204–224 (LSLGLAGAPAVVIFLGALFLT) traverse the membrane as a helical segment. The Cytoplasmic segment spans residues 225 to 288 (DTPSSLVMRG…AARREYRPYL (64 aa)). The helical transmembrane segment at 289–309 (VFAVAMPMFFQLTGVIVISFF) threads the bilayer. The Extracellular segment spans residues 310–325 (SPLVFRTVGFGSNAAL). Residues 326–346 (MGNVILGAVNLVCLMLSTLVI) traverse the membrane as a helical segment. At 347-352 (DRYGRK) the chain is on the cytoplasmic side. Residues 353–373 (VLFMVGGAIMIIAQVGVAWIM) traverse the membrane as a helical segment. Over 374-389 (GAQVGKNGSEAMARPY) the chain is Extracellular. Residues 390–410 (AVAVVAFTCLHTAGFGWSWGP) form a helical membrane-spanning segment. Topologically, residues 411–430 (LGWVIPGEIFPVDIRSAGQA) are cytoplasmic. A helical membrane pass occupies residues 431–451 (MNVSIGLGLTFVQTQSFLAML). At 452 to 456 (CRFRY) the chain is on the extracellular side. The chain crosses the membrane as a helical span at residues 457–477 (GTFAYYAAWVAVMTVFIAVFL). Residues 478 to 517 (PETKGVPLESMATVWARHWYWKRFAREQPKTSADEPTGTY) lie on the Cytoplasmic side of the membrane.

Belongs to the major facilitator superfamily. Sugar transporter (TC 2.A.1.1) family.

It is found in the membrane. Its function is as follows. Mediates active uptake of hexoses by sugar:proton symport. The protein is Sugar transport protein MST1 of Oryza sativa subsp. japonica (Rice).